We begin with the raw amino-acid sequence, 1976 residues long: MAQRTGLEDPERYLFVDRAVIYNPATQADWTAKKLVWIPSERHGFEAASIKEERGDEVMVELAENGKKAMVNKDDIQKMNPPKFSKVEDMAELTCLNEASVLHNLKDRYYSGLIYTYSGLFCVVINPYKNLPIYSENIIEMYRGKKRHEMPPHIYAISESAYRCMLQDREDQSILCTGESGAGKTENTKKVIQYLAHVASSHKGRKDHNIPGELERQLLQANPILESFGNAKTVKNDNSSRFGKFIRINFDVTGYIVGANIETYLLEKSRAVRQAKDERTFHIFYQLLSGAGEHLKSDLLLEGFNNYRFLSNGYIPIPGQQDKDNFQETMEAMHIMGFSHEEILSMLKVVSSVLQFGNISFKKERNTDQASMPENTVAQKLCHLLGMNVMEFTRAILTPRIKVGRDYVQKAQTKEQADFAVEALAKATYERLFRWLVHRINKALDRTKRQGASFIGILDIAGFEIFELNSFEQLCINYTNEKLQQLFNHTMFILEQEEYQREGIEWNFIDFGLDLQPCIDLIERPANPPGVLALLDEECWFPKATDKTFVEKLVQEQGSHSKFQKPRQLKDKADFCIIHYAGKVDYKADEWLMKNMDPLNDNVATLLHQSSDRFVAELWKDVDRIVGLDQVTGMTETAFGSAYKTKKGMFRTVGQLYKESLTKLMATLRNTNPNFVRCIIPNHEKRAGKLDPHLVLDQLRCNGVLEGIRICRQGFPNRIVFQEFRQRYEILTPNAIPKGFMDGKQACERMIRALELDPNLYRIGQSKIFFRAGVLAHLEEERDLKITDIIIFFQAVCRGYLARKAFAKKQQQLSALKVLQRNCAAYLKLRHWQWWRVFTKVKPLLQVTRQEEELQAKDEELLKVKEKQTKVEGELEEMERKHQQLLEEKNILAEQLQAETELFAEAEEMRARLAAKKQELEEILHDLESRVEEEEERNQILQNEKKKMQAHIQDLEEQLDEEEGARQKLQLEKVTAEAKIKKMEEEILLLEDQNSKFIKEKKLMEDRIAECSSQLAEEEEKAKNLAKIRNKQEVMISDLEERLKKEEKTRQELEKAKRKLDGETTDLQDQIAELQAQIDELKLQLAKKEEELQGALARGDDETLHKNNALKVVRELQAQIAELQEDFESEKASRNKAEKQKRDLSEELEALKTELEDTLDTTAAQQELRTKREQEVAELKKALEEETKNHEAQIQDMRQRHATALEELSEQLEQAKRFKANLEKNKQGLETDNKELACEVKVLQQVKAESEHKRKKLDAQVQELHAKVSEGDRLRVELAEKASKLQNELDNVSTLLEEAEKKGIKFAKDAASLESQLQDTQELLQEETRQKLNLSSRIRQLEEEKNSLQEQQEEEEEARKNLEKQVLALQSQLADTKKKVDDDLGTIESLEEAKKKLLKDAEALSQRLEEKALAYDKLEKTKNRLQQELDDLTVDLDHQRQVASNLEKKQKKFDQLLAEEKSISARYAEERDRAEAEAREKETKALSLARALEEALEAKEEFERQNKQLRADMEDLMSSKDDVGKNVHELEKSKRALEQQVEEMRTQLEELEDELQATEDAKLRLEVNMQAMKAQFERDLQTRDEQNEEKKRLLIKQVRELEAELEDERKQRALAVASKKKMEIDLKDLEAQIEAANKARDEVIKQLRKLQAQMKDYQRELEEARASRDEIFAQSKESEKKLKSLEAEILQLQEELASSERARRHAEQERDELADEITNSASGKSALLDEKRRLEARIAQLEEELEEEQSNMELLNDRFRKTTLQVDTLNAELAAERSAAQKSDNARQQLERQNKELKAKLQELEGAVKSKFKATISALEAKIGQLEEQLEQEAKERAAANKLVRRTEKKLKEIFMQVEDERRHADQYKEQMEKANARMKQLKRQLEEAEEEATRANASRRKLQRELDDATEANEGLSREVSTLKNRLRRGGPISFSSSRSGRRQLHLEGASLELSDDDTESKTSDVNETQPPQSE.

The residue at position 18 (arginine 18) is an Omega-N-methylarginine. The Myosin N-terminal SH3-like domain occupies 31 to 81 (TAKKLVWIPSERHGFEAASIKEERGDEVMVELAENGKKAMVNKDDIQKMNP). Positions 85–783 (SKVEDMAELT…VLAHLEEERD (699 aa)) constitute a Myosin motor domain. 178–185 (GESGAGKT) contacts ATP. At leucine 214 the chain carries Phosphoserine. Residue lysine 442 is modified to N6-acetyllysine. An actin-binding region spans residues 661–683 (LTKLMATLRNTNPNFVRCIIPNH). Residues 786-815 (ITDIIIFFQAVCRGYLARKAFAKKQQQLSA) enclose the IQ domain. The stretch at 845-1976 (LQVTRQEEEL…VNETQPPQSE (1132 aa)) forms a coiled coil. The tract at residues 1127–1147 (FESEKASRNKAEKQKRDLSEE) is disordered. The span at 1129–1147 (SEKASRNKAEKQKRDLSEE) shows a compositional bias: basic and acidic residues. Serine 1145 is modified (phosphoserine). An N6-acetyllysine mark is found at lysine 1241, lysine 1301, and lysine 1645. Disordered regions lie at residues 1697-1728 (ASSERARRHAEQERDELADEITNSASGKSALL) and 1872-1976 (MEKA…PQSE). Basic and acidic residues predominate over residues 1698–1708 (SSERARRHAEQ). Omega-N-methylarginine is present on arginine 1930. Phosphoserine is present on residues serine 1935, serine 1937, serine 1938, and serine 1939. The residue at position 1940 (arginine 1940) is an Omega-N-methylarginine. A phosphoserine mark is found at serine 1952 and serine 1956. Threonine 1960 is modified (phosphothreonine). Residues 1967-1976 (VNETQPPQSE) show a composition bias toward polar residues. Position 1975 is a phosphoserine (serine 1975).

Belongs to the TRAFAC class myosin-kinesin ATPase superfamily. Myosin family. In terms of assembly, myosin is a hexameric protein that consists of 2 heavy chain subunits (MHC), 2 alkali light chain subunits (MLC) and 2 regulatory light chain subunits (MLC-2). Interacts with PLEKHG6. Interacts with ECPAS. Interacts with KIF26B. Interacts with LARP6. Interacts with MCC. Interacts with CFAP95. (Microbial infection) Interacts with herpes simplex virus 1/HHV-1 envelope glycoprotein B. In terms of processing, phosphorylated by ABL2. In terms of tissue distribution, isoform 1 is expressed in cerebellum and spinal chord. Isoform 2 is expressed in cerebrum and retina. Isoform 3 is expressed in the cerebrum and to a much lower extent in cerebellum.

It localises to the cell projection. The protein localises to the lamellipodium. The protein resides in the cell membrane. Functionally, cellular myosin that appears to play a role in cytokinesis, cell shape, and specialized functions such as secretion and capping. Involved with LARP6 in the stabilization of type I collagen mRNAs for CO1A1 and CO1A2. During cell spreading, plays an important role in cytoskeleton reorganization, focal contacts formation (in the central part but not the margins of spreading cells), and lamellipodial extension; this function is mechanically antagonized by MYH9. Its function is as follows. (Microbial infection) Acts as a receptor for herpes simplex virus 1/HHV-1 envelope glycoprotein B. The polypeptide is Myosin-10 (MYH10) (Homo sapiens (Human)).